We begin with the raw amino-acid sequence, 169 residues long: CRISPR system Cmr subunit Cmr5 (169 aa).

Belongs to the CRISPR system Cmr5 family. Monomer in isolation. Part of the type III-B Cmr ribonucleoprotein (RNP) complex, an elongated RNP with Cmr2 and Cmr3 as the base, with Cmr4 and Cmr5 forming a helical core along the mature crRNA (39 or 45 nt in length), while the complex is capped by Cmr6 and Cmr1. The 5' end of the crRNA is bound to Cmr2 and Cmr3, while Cmr6 and a Cmr1 subunit (Cmr1-1 or Cmr1-2) cap the 3' end of the crRNA. The target RNA lies antiparallel to the crRNA, with its 5' end near Cmr1 and Cmr6 and its 3' end near Cmr2 and Cmr3; major target cleavage occurs nears the junction of Cmr1/Cmr6 and Cmr4/Cmr, with minor cleavage occurring at 6 nt intervals which coincide with the proposed spacing of Cmr4 subunits. Interacts with Cmr4. Interacts with Cmr2, Cmr4 and Cmr6.

The protein resides in the cytoplasm. Its function is as follows. CRISPR (clustered regularly interspaced short palindromic repeat), is an adaptive immune system that provides protection against mobile genetic elements (viruses, transposable elements and conjugative plasmids). CRISPR clusters contain sequences complementary to antecedent mobile elements and target invading nucleic acids. CRISPR clusters are transcribed and processed into CRISPR RNA (crRNA), formerly called psiRNA (prokaryotic silencing) in this organism. Part of the Cmr ribonucleoprotein complex which has divalent cation-dependent endoribonuclease activity specific for ssRNA complementary to the crRNA (target NRA), generating 5' hydroxy- and 3' phosphate or 2'-3' cyclic phosphate termini. Cmr4 is probably the subunit that cleaves target RNA. Cmr complex does not cleave ssDNA complementary to the crRNA. Cleavage of invading RNA is guided by the crRNA; substrate cleavage occurs a fixed distance (14 nt) from the 3' end of the crRNA. In vitro reconstitution shows Cmr1-2 and Cmr5 are not absolutely necessary for target cleavage. This chain is CRISPR system Cmr subunit Cmr5, found in Pyrococcus furiosus (strain ATCC 43587 / DSM 3638 / JCM 8422 / Vc1).